The chain runs to 232 residues: Ubiquinone biosynthesis O-methyltransferase (232 aa).

The S-adenosyl-L-methionine site is built by R36, G55, D76, and L120.

The protein belongs to the methyltransferase superfamily. UbiG/COQ3 family.

The enzyme catalyses a 3-demethylubiquinol + S-adenosyl-L-methionine = a ubiquinol + S-adenosyl-L-homocysteine + H(+). The catalysed reaction is a 3-(all-trans-polyprenyl)benzene-1,2-diol + S-adenosyl-L-methionine = a 2-methoxy-6-(all-trans-polyprenyl)phenol + S-adenosyl-L-homocysteine + H(+). It functions in the pathway cofactor biosynthesis; ubiquinone biosynthesis. O-methyltransferase that catalyzes the 2 O-methylation steps in the ubiquinone biosynthetic pathway. The polypeptide is Ubiquinone biosynthesis O-methyltransferase (Pseudomonas savastanoi pv. phaseolicola (strain 1448A / Race 6) (Pseudomonas syringae pv. phaseolicola (strain 1448A / Race 6))).